A 428-amino-acid polypeptide reads, in one-letter code: 3-phosphoshikimate 1-carboxyvinyltransferase (428 aa).

3-phosphoshikimate is bound by residues lysine 21, serine 22, and arginine 26. Lysine 21 provides a ligand contact to phosphoenolpyruvate. Phosphoenolpyruvate-binding residues include glycine 91 and arginine 119. Residues serine 164, glutamine 166, aspartate 313, and lysine 340 each coordinate 3-phosphoshikimate. Phosphoenolpyruvate is bound at residue glutamine 166. Catalysis depends on aspartate 313, which acts as the Proton acceptor. Phosphoenolpyruvate-binding residues include arginine 344 and arginine 386.

This sequence belongs to the EPSP synthase family. As to quaternary structure, monomer.

It localises to the cytoplasm. The catalysed reaction is 3-phosphoshikimate + phosphoenolpyruvate = 5-O-(1-carboxyvinyl)-3-phosphoshikimate + phosphate. The protein operates within metabolic intermediate biosynthesis; chorismate biosynthesis; chorismate from D-erythrose 4-phosphate and phosphoenolpyruvate: step 6/7. Functionally, catalyzes the transfer of the enolpyruvyl moiety of phosphoenolpyruvate (PEP) to the 5-hydroxyl of shikimate-3-phosphate (S3P) to produce enolpyruvyl shikimate-3-phosphate and inorganic phosphate. The sequence is that of 3-phosphoshikimate 1-carboxyvinyltransferase from Campylobacter jejuni subsp. doylei (strain ATCC BAA-1458 / RM4099 / 269.97).